The chain runs to 461 residues: Protein-serine O-palmitoleoyltransferase porcupine (461 aa).

Topologically, residues 1–17 (MATFSRQEFFQQLLQGC) are cytoplasmic. A helical transmembrane segment spans residues 18–38 (LLPTVQQGLDQIWLLLTICFA). Over 39-66 (CRLLWRLGLPSYLKHASTVAGGFFSLYH) the chain is Extracellular. A helical membrane pass occupies residues 67–87 (FFQLHMVWVVLLSLLCYLVLF). Residues 88–95 (LCRHSSHR) are Cytoplasmic-facing. The helical transmembrane segment at 96–116 (GVFLSVTILIYLLMGEMHMVD) threads the bilayer. Residues 117–152 (TVTWHKMRGAQMIVAMKAVSLGFDLDRGEVGAVPSP) lie on the Extracellular side of the membrane. Residues 153–173 (VEFMGYLYFVGTIVFGPWISF) form a helical membrane-spanning segment. The Cytoplasmic portion of the chain corresponds to 174-198 (HSYLQAVQGRPLSRRWLKKVARSLA). The helical transmembrane segment at 199 to 219 (LALLCLVLSTCVGPYLFPYFI) threads the bilayer. At 220-252 (PLDGDRLLRNKKRKARGTMVRWLRAYESAVSFH) the chain is on the extracellular side. Residues 253 to 273 (FSNYFVGFLSEATATLAGAGF) traverse the membrane as a helical segment. Residues 274–337 (TEEKDHLEWD…SAVLVTYAAS (64 aa)) lie on the Cytoplasmic side of the membrane. A helical membrane pass occupies residues 338-358 (ALLHGFSFHLAAVLLSLAFIT). Histidine 341 is a catalytic residue. Over 359 to 396 (YVEHVLRKRLAQILSACILSKRCLPDCSHRHRLGLGVR) the chain is Extracellular. The helical transmembrane segment at 397–417 (ALNLLFGALAIFHLSYLGSLF) threads the bilayer. Residues 418–461 (DVDVDDTTEEQGYGMAYTVHKWSELSWASHWVTFGCWIFYRLIG) are Cytoplasmic-facing.

It belongs to the membrane-bound acyltransferase family. Porcupine subfamily. As to quaternary structure, interacts with WNT1, WNT3, WNT3A, WNT4, WNT5A, WNT5B, WNT6, WNT7A and WNT7B. Expressed in brain, heart, kidney, liver, lung, muscle, spleen and testis. Isoform 4 is strongly expressed in kidney, liver, lung, spleen and testis. Isoform 1 is strongly expressed in brain, heart and muscle and poorly in kidney, liver, lung, spleen and testis.

Its subcellular location is the endoplasmic reticulum membrane. It catalyses the reaction [Wnt protein]-L-serine + (9Z)-hexadecenoyl-CoA = [Wnt protein]-O-(9Z)-hexadecenoyl-L-serine + CoA. Functionally, protein-serine O-palmitoleoyltransferase that acts as a key regulator of the Wnt signaling pathway by mediating the attachment of palmitoleate, a 16-carbon monounsaturated fatty acid (C16:1(9Z)), to Wnt proteins. Serine palmitoleoylation of WNT proteins is required for efficient binding to frizzled receptors. This is Protein-serine O-palmitoleoyltransferase porcupine from Mus musculus (Mouse).